The chain runs to 642 residues: Frizzled-1 (642 aa).

The first 68 residues, Met-1–Gly-68, serve as a signal peptide directing secretion. Disordered stretches follow at residues Pro-26–Ala-45 and Gln-76–Gly-99. The Extracellular portion of the chain corresponds to Val-69–Trp-317. The region spanning Pro-106–Gln-225 is the FZ domain. Intrachain disulfides connect Cys-111-Cys-172, Cys-119-Cys-165, Cys-156-Cys-193, Cys-182-Cys-222, and Cys-186-Cys-210. Asn-125 carries an N-linked (GlcNAc...) asparagine glycan. Residue Asn-226 is glycosylated (N-linked (GlcNAc...) asparagine). Residues Ile-318–Val-338 traverse the membrane as a helical segment. At Asp-339 to Pro-349 the chain is on the cytoplasmic side. The chain crosses the membrane as a helical span at residues Ile-350–Leu-370. Residues Glu-371–Cys-397 are Extracellular-facing. A helical transmembrane segment spans residues Thr-398 to Leu-418. Over Ser-419–Gln-440 the chain is Cytoplasmic. Residues Tyr-441 to Gly-461 form a helical membrane-spanning segment. The Extracellular segment spans residues Gln-462 to Gly-484. Residues Phe-485–Phe-505 form a helical membrane-spanning segment. Residues Val-506 to Arg-531 are Cytoplasmic-facing. The chain crosses the membrane as a helical span at residues Ile-532–Tyr-552. The Extracellular segment spans residues Glu-553–Pro-593. The chain crosses the membrane as a helical span at residues Asp-594 to Phe-614. Residues Trp-615–Val-642 lie on the Cytoplasmic side of the membrane. The short motif at Lys-620–Trp-625 is the Lys-Thr-X-X-X-Trp motif, mediates interaction with the PDZ domain of Dvl family members element. A PDZ-binding motif is present at residues Thr-640–Val-642.

It belongs to the G-protein coupled receptor Fz/Smo family. In terms of assembly, interacts with MYOC. Interacts with WNT7B. In terms of processing, ubiquitinated by ZNRF3, leading to its degradation by the proteasome. In terms of tissue distribution, expressed in chondrocytes.

The protein localises to the cell membrane. Receptor for Wnt proteins. Activated by WNT7B. Activated by WNT3A, WNT3, WNT1 and to a lesser extent WNT2, but apparently not by WNT4, WNT5A, WNT5B, WNT6, WNT7A or WNT7B. Contradictory results showing activation by WNT7B have been described for mouse. Functions in the canonical Wnt/beta-catenin signaling pathway. The canonical Wnt/beta-catenin signaling pathway leads to the activation of disheveled proteins, inhibition of GSK-3 kinase, nuclear accumulation of beta-catenin and activation of Wnt target genes. A second signaling pathway involving PKC and calcium fluxes has been seen for some family members, but it is not yet clear if it represents a distinct pathway or if it can be integrated in the canonical pathway, as PKC seems to be required for Wnt-mediated inactivation of GSK-3 kinase. Both pathways seem to involve interactions with G-proteins. May be involved in transduction and intercellular transmission of polarity information during tissue morphogenesis and/or in differentiated tissues. In Mus musculus (Mouse), this protein is Frizzled-1 (Fzd1).